The sequence spans 198 residues: Adenylyl-sulfate kinase (198 aa).

Residue 31-38 (GLSGAGKS) coordinates ATP. S105 (phosphoserine intermediate) is an active-site residue.

Belongs to the APS kinase family.

It carries out the reaction adenosine 5'-phosphosulfate + ATP = 3'-phosphoadenylyl sulfate + ADP + H(+). It participates in sulfur metabolism; hydrogen sulfide biosynthesis; sulfite from sulfate: step 2/3. Catalyzes the synthesis of activated sulfate. This is Adenylyl-sulfate kinase from Shewanella amazonensis (strain ATCC BAA-1098 / SB2B).